Consider the following 352-residue polypeptide: MEQQELFDVTVIGGGPAGLYSTFYSGLRGMKTKLIEYQAELGGKIHVYPEKMIWDVGGQPPITGAKLMEQLVEQGLTFNPTVHLNEKIISITKDVFGNFVLEAESGMIHYSKTVIVAVGGGILNPQKLKIEGAERYEVSNLNYTVKSIERFKDKTVIISGGGNSAIDWANELEPVAKKVYVTYRKDCFTGHEAQVEQLVNSSAVCLLNTTIHKLIASDDHHRIASVELIDCTTNETVALEIDEVIINHGYEQDAELLANCDLDLQQVDDFYIAGTASSESSVPGLYAAGDILSHEGKVHLISGAFQDAANAVNRAKKYIEPEAPKVAMVSSHNEVFKKRNRELIQEMVNQNR.

Residues Glu36, Lys44, Tyr48, Ile88, Leu123, Asp290, and Ser331 each contribute to the FAD site.

It belongs to the ferredoxin--NADP reductase type 2 family. Homodimer. It depends on FAD as a cofactor.

It carries out the reaction 2 reduced [2Fe-2S]-[ferredoxin] + NADP(+) + H(+) = 2 oxidized [2Fe-2S]-[ferredoxin] + NADPH. This is Ferredoxin--NADP reductase 2 from Exiguobacterium sibiricum (strain DSM 17290 / CCUG 55495 / CIP 109462 / JCM 13490 / 255-15).